A 170-amino-acid chain; its full sequence is Photosystem I assembly protein Ycf3 (170 aa).

TPR repeat units lie at residues 35–68 (AFTY…EIDP), 72–105 (SYIL…NPFL), and 120–153 (GEQA…TPGN).

Belongs to the Ycf3 family.

The protein localises to the plastid. Its subcellular location is the chloroplast thylakoid membrane. Its function is as follows. Essential for the assembly of the photosystem I (PSI) complex. May act as a chaperone-like factor to guide the assembly of the PSI subunits. This Triticum aestivum (Wheat) protein is Photosystem I assembly protein Ycf3.